The primary structure comprises 348 residues: NADH-ubiquinone oxidoreductase chain 2 (348 aa).

10 consecutive transmembrane segments (helical) span residues 3-23 (PTVLTIIISSMGLGTTLTFIG), 25-45 (HWLLVWMGLEINTLAIIPLMI), 59-79 (YFITQATASALLLFASVTNAW), 95-115 (ATLATAALALKIGLAPLHFWL), 149-171 (LNSNLLLLFGVTSTIVGGWGGLN), 178-198 (ILAYSSIANLGWMITILHYSP), 199-219 (SLTLLNLILYMFMTLTTFLLF), 242-262 (VIALMTLLSLGGLPPLSGFMP), 274-294 (SLIIPATIMALMALLSLFFYL), and 324-344 (LILLTSASISIFMLPMTPLIL).

Belongs to the complex I subunit 2 family.

It is found in the mitochondrion inner membrane. It catalyses the reaction a ubiquinone + NADH + 5 H(+)(in) = a ubiquinol + NAD(+) + 4 H(+)(out). Core subunit of the mitochondrial membrane respiratory chain NADH dehydrogenase (Complex I) that is believed to belong to the minimal assembly required for catalysis. Complex I functions in the transfer of electrons from NADH to the respiratory chain. The immediate electron acceptor for the enzyme is believed to be ubiquinone. The sequence is that of NADH-ubiquinone oxidoreductase chain 2 (MT-ND2) from Scyliorhinus canicula (Small-spotted catshark).